We begin with the raw amino-acid sequence, 589 residues long: Guanylate-binding protein 2 (589 aa).

Positions 1–309 (MASEIHMSEP…GAISNGSLPC (309 aa)) are GTPase domain (Globular). One can recognise a GB1/RHD3-type G domain in the interval 35 to 276 (TQPVVVVAIV…FTSYILSYSS (242 aa)). Residues 45 to 52 (GLYRTGKS), 181 to 182 (RD), and Leu-245 each bind GTP. Cys-586 is modified (cysteine methyl ester). Residue Cys-586 is the site of S-geranylgeranyl cysteine attachment. Positions 587-589 (TIL) are cleaved as a propeptide — removed in mature form.

Belongs to the TRAFAC class dynamin-like GTPase superfamily. GB1/RHD3 GTPase family. GB1 subfamily. In terms of assembly, homodimer; homodimerization occurs upon GTP-binding and is required for the association with membranous structures. Heterodimer with other family members, including GBP1, GBP3, GBP4 and GBP5. Isoprenylation is required for proper subcellular location.

The protein resides in the cytoplasmic vesicle membrane. The protein localises to the golgi apparatus membrane. It is found in the cytoplasm. It localises to the perinuclear region. It catalyses the reaction GTP + H2O = GDP + phosphate + H(+). Its function is as follows. Interferon (IFN)-inducible GTPase that plays important roles in innate immunity against a diverse range of bacterial, viral and protozoan pathogens. Hydrolyzes GTP to GMP in 2 consecutive cleavage reactions, but the major reaction product is GDP. Following infection, recruited to the pathogen-containing vacuoles or vacuole-escaped bacteria and acts as a positive regulator of inflammasome assembly by promoting the release of inflammasome ligands from bacteria. Acts by promoting lysis of pathogen-containing vacuoles, releasing pathogens into the cytosol. Following pathogen release in the cytosol, promotes recruitment of proteins that mediate bacterial cytolysis, such as Gm12250/Irgb10: this liberates ligands that are detected by inflammasomes, such as lipopolysaccharide (LPS) that activates the non-canonical CASP4/CASP11 inflammasome or double-stranded DNA (dsDNA) that activates the AIM2 inflammasome. Confers protection to the protozoan pathogen Toxoplasma gondii. Independently of its GTPase activity, acts as an inhibitor of various viruses infectivity by inhibiting FURIN-mediated maturation of viral envelope proteins. The polypeptide is Guanylate-binding protein 2 (Mus musculus (Mouse)).